Here is a 346-residue protein sequence, read N- to C-terminus: Putative serine/threonine-protein kinase K06H7.1 (346 aa).

Positions 20–287 constitute a Protein kinase domain; sequence YKVVQKLGEG…KLFKLLEDVM (268 aa). Residues 26-34 and Lys50 contribute to the ATP site; that span reads LGEGGCGSV. The active-site Proton acceptor is Asp141. The segment at 302 to 326 is disordered; sequence PEKKKNPASQGNKFGLGKKGTKESG.

This sequence belongs to the protein kinase superfamily. Ser/Thr protein kinase family.

It catalyses the reaction L-seryl-[protein] + ATP = O-phospho-L-seryl-[protein] + ADP + H(+). The enzyme catalyses L-threonyl-[protein] + ATP = O-phospho-L-threonyl-[protein] + ADP + H(+). This Caenorhabditis elegans protein is Putative serine/threonine-protein kinase K06H7.1.